The following is a 769-amino-acid chain: Acetyl-coenzyme A carboxylase carboxyl transferase subunit alpha, chloroplastic (769 aa).

The N-terminal 54 residues, 1–54, are a transit peptide targeting the chloroplast; sequence MASISHSSLALGGASSASASDYLRSSSNGVNGVPLKTLGRAVFTTIRRKDLAVT. One can recognise a CoA carboxyltransferase C-terminal domain in the interval 132 to 385; the sequence is LENKYRQALK…KIAINENMNE (254 aa). Coiled coils occupy residues 426–504 and 631–744; these read EAVF…ASSE and KQNQ…SDGS. The segment at 718–769 is disordered; sequence GLQEKQDELEKELAAARELAAEESDGSVKEDDDDDEDSSESGKSEMVNPSFA. Residues 721-732 are compositionally biased toward basic and acidic residues; the sequence is EKQDELEKELAA. Residues 738–756 show a composition bias toward acidic residues; sequence AEESDGSVKEDDDDDEDSS. Ser741 carries the post-translational modification Phosphoserine.

The protein belongs to the AccA family. Acetyl-CoA carboxylase is a heterohexamer composed of biotin carboxyl carrier protein, biotin carboxylase and two subunits each of ACCase subunit alpha and ACCase plastid-coded subunit beta (accD). Accumulates in fatty acids synthesizing tissues such as embryos, expanding leaves, flower buds, flowers, and developing siliques.

Its subcellular location is the plastid. It is found in the chloroplast inner membrane. The enzyme catalyses N(6)-carboxybiotinyl-L-lysyl-[protein] + acetyl-CoA = N(6)-biotinyl-L-lysyl-[protein] + malonyl-CoA. Its pathway is lipid metabolism; malonyl-CoA biosynthesis; malonyl-CoA from acetyl-CoA: step 1/1. In terms of biological role, component of the acetyl coenzyme A carboxylase (ACC) complex. First, biotin carboxylase catalyzes the carboxylation of biotin on its carrier protein (BCCP) and then the CO(2) group is transferred by the carboxyltransferase to acetyl-CoA to form malonyl-CoA. The polypeptide is Acetyl-coenzyme A carboxylase carboxyl transferase subunit alpha, chloroplastic (CAC3) (Arabidopsis thaliana (Mouse-ear cress)).